The sequence spans 331 residues: Ferrochelatase (331 aa).

Fe cation-binding residues include His187 and Glu286.

It belongs to the ferrochelatase family.

Its subcellular location is the cytoplasm. The enzyme catalyses heme b + 2 H(+) = protoporphyrin IX + Fe(2+). Its pathway is porphyrin-containing compound metabolism; protoheme biosynthesis; protoheme from protoporphyrin-IX: step 1/1. In terms of biological role, catalyzes the ferrous insertion into protoporphyrin IX. This Legionella pneumophila (strain Paris) protein is Ferrochelatase.